The following is a 352-amino-acid chain: C-C chemokine receptor type 5 (352 aa).

Topologically, residues 1-30 are extracellular; sequence MDYQVSSPTYDIDYYTSEPCQKVNVKQIAA. Tyrosine 3 carries the sulfotyrosine modification. 2 O-linked (GalNAc...) serine glycosylation sites follow: serine 6 and serine 7. Tyrosine 10, tyrosine 14, and tyrosine 15 each carry sulfotyrosine. 2 disulfide bridges follow: cysteine 20–cysteine 269 and cysteine 101–cysteine 178. The chain crosses the membrane as a helical span at residues 31 to 58; sequence RLLPPLYSLVFIFGFVGNILVVLILINC. Topologically, residues 59 to 68 are cytoplasmic; it reads KRLKSMTDIY. The helical transmembrane segment at 69–89 threads the bilayer; sequence LLNLAISDLFFLLTVPFWAHY. The Extracellular segment spans residues 90-102; sequence AAAQWDFGNTMCQ. The chain crosses the membrane as a helical span at residues 103 to 124; it reads LLTGLYFIGFFSGIFFIILLTI. The Cytoplasmic portion of the chain corresponds to 125–141; sequence DRYLAIVHAVFALKART. Residues 142 to 166 form a helical membrane-spanning segment; sequence VTFGVVTSVITWVVAVFASLPGIIF. At 167–198 the chain is on the extracellular side; the sequence is TRSQREGLHYTCSSHFPYSQYQFWKNFQTLKI. The chain crosses the membrane as a helical span at residues 199 to 218; that stretch reads VILGLVLPLLVMVICYSGIL. The Cytoplasmic portion of the chain corresponds to 219–235; that stretch reads KTLLRCRNEKKRHRAVR. Residues 236–260 traverse the membrane as a helical segment; sequence LIFTIMIVYFLFWAPYNIVLLLNTF. Residues 261-277 lie on the Extracellular side of the membrane; that stretch reads QEFFGLNNCSSSNRLDQ. A helical transmembrane segment spans residues 278–301; it reads AMQVTETLGMTHCCINPIIYAFVG. The Cytoplasmic portion of the chain corresponds to 302-352; sequence EKFRNYLLVFFQKHIAKRFCKCCYIFQQEAPERASSVYTRSTGEQEISVGL. Residues cysteine 321, cysteine 323, and cysteine 324 are each lipidated (S-palmitoyl cysteine). 4 positions are modified to phosphoserine; by BARK1: serine 336, serine 337, serine 342, and serine 349.

This sequence belongs to the G-protein coupled receptor 1 family. Interacts with PRAF2. Efficient ligand binding to CCL3/MIP-1alpha and CCL4/MIP-1beta requires sulfation, O-glycosylation and sialic acid modifications. Glycosylation on Ser-6 is required for efficient binding of CCL4. Interacts with GRK2. Interacts with ARRB1 and ARRB2. Interacts with CNIH4. Interacts with S100A4; this interaction stimulates T-lymphocyte chemotaxis. Sulfated on at least 2 of the N-terminal tyrosines. Sulfation is required for efficient binding of the chemokines, CCL3 and CCL4. Post-translationally, palmitoylation in the C-terminal is important for cell surface expression. In terms of processing, phosphorylation on serine residues in the C-terminal is stimulated by binding CC chemokines especially by APO-RANTES. O-glycosylated, but not N-glycosylated. Ser-6 appears to be the major site even if Ser-7 may be also O-glycosylated. Also sialylated glycans present which contribute to chemokine binding. Thr-16 and Ser-17 may also be glycosylated and, if so, with small moieties such as a T-antigen.

The protein resides in the cell membrane. Receptor for a number of inflammatory CC-chemokines including CCL3/MIP-1-alpha, CCL4/MIP-1-beta and RANTES and subsequently transduces a signal by increasing the intracellular calcium ion level. May play a role in the control of granulocytic lineage proliferation or differentiation. Participates in T-lymphocyte migration to the infection site by acting as a chemotactic receptor. The polypeptide is C-C chemokine receptor type 5 (CCR5) (Rhinopithecus bieti (Black snub-nosed monkey)).